The chain runs to 229 residues: Probable calcium-binding protein CML22 (229 aa).

EF-hand domains are found at residues 53–88 (EGLRNIRSVFESYDNDTNGTIDIEELKKCLEELKLS), 89–124 (LSDEEVKGLYSWCDVDGSKGIQFNEFIVLLCLIYLL), 145–180 (SIFDPIVEVFLFLDKDGKGKLNKADVIKTLNNEDYP), and 184–219 (SPSHVTNMRFEEMDWGRKGKVGFREFLFAFMSWVGL). Residues aspartate 66, aspartate 68, asparagine 70, threonine 72, and glutamate 77 each coordinate Ca(2+).

Potential calcium sensor. This is Probable calcium-binding protein CML22 (CML22) from Arabidopsis thaliana (Mouse-ear cress).